The primary structure comprises 676 residues: MPDPSTYRPAPGSIPVEPGVYRFRDPHGRVIYVGKAKSLRSRLNSYFADLSGLAPRTRQMVMTAAKVEWTVVNTEVEALQLEYNWIKEFDPRFNIRYRDDKSYPVLAVTLNEEFPRLKVYRGPRKKGVRYFGPYSHAWAIRETVDLLTRVFPARTCSAGVFKRHNQIDRPCLLGYIDKCSAPCVGRVSAEQHRQIVLDFCDFLAGKTDRLVRDLERKMTAAAEDLDFERAARLRDDIGALRRALEKQTVVFGDGTDADVVAFADDDLEAAVQVFHVRGGRVRGQRGWIVEKSGEPGESGEGQLVEQFLTQFYGDQAELGSAGDNAGDSGQDEATNPVPRQVLVPCLPDNADELTEWLSQLRGSRVALRVPQRGDKKALFETVQRNAKEALAQHKLKRAGDFTARTAALQSIQDTLGLADAPLRIECIDISHVQGTDVVASLVVFEDGLPRKSDYRHYAIREAAGDGRSDDVASIAEVTRRRFYRHLHDTQHPTELSAEGKSRKFAYPPNLFVVDGGAPQVNAAQAVLDELGISDVAVIGLAKRLEEVWVPSGSDLGPEPIILPRNSEGLYLLQRVRDEAHRFAITYHRSKRSKRMTASALDSVRGLGEHRRKALVTHFGSVARLKEASVEEITAVPGIGVTTARAVLEALGVPQAAPADSDTAAAVIDDDQRRVTG.

Residues 16–95 enclose the GIY-YIG domain; it reads VEPGVYRFRD…IKEFDPRFNI (80 aa). One can recognise a UVR domain in the interval 208–243; that stretch reads DRLVRDLERKMTAAAEDLDFERAARLRDDIGALRRA.

It belongs to the UvrC family. As to quaternary structure, interacts with UvrB in an incision complex.

It localises to the cytoplasm. Its function is as follows. The UvrABC repair system catalyzes the recognition and processing of DNA lesions. UvrC both incises the 5' and 3' sides of the lesion. The N-terminal half is responsible for the 3' incision and the C-terminal half is responsible for the 5' incision. This chain is UvrABC system protein C, found in Mycobacterium sp. (strain KMS).